The sequence spans 389 residues: Probable nitrate transporter NarT (389 aa).

A run of 12 helical transmembrane segments spans residues 14-34 (TLSL…MPFI), 45-65 (ISII…PFGY), 69-89 (IVGA…PIFF), 97-117 (GMLM…SVGV), 139-159 (GNIG…IIGW), 161-181 (TTVR…FIFG), 211-231 (WYFI…NYLV), 246-266 (GVFI…GDKF), 268-288 (AVKV…ILGI), 294-314 (LFTV…GLIF), 331-351 (IVSM…TYVA), and 353-373 (LTGS…IALF).

Belongs to the major facilitator superfamily. Nitrate/nitrite porter (TC 2.A.1.8) family.

It is found in the cell membrane. Probably required for nitrate uptake under anoxic conditions. Also possibly involved in excretion of nitrite produced by the dissimilatory reduction of nitrate. This chain is Probable nitrate transporter NarT (narT), found in Staphylococcus aureus (strain MRSA252).